The chain runs to 888 residues: Protein translocase subunit SecA (888 aa).

Residues Gln-81, 99–103, and Asp-489 contribute to the ATP site; that span reads GEGKT.

It belongs to the SecA family.

Its subcellular location is the plastid. The protein resides in the chloroplast stroma. The protein localises to the chloroplast thylakoid membrane. The catalysed reaction is ATP + H2O + cellular proteinSide 1 = ADP + phosphate + cellular proteinSide 2.. Has a central role in coupling the hydrolysis of ATP to the transfer of proteins across the thylakoid membrane. The chain is Protein translocase subunit SecA from Trieres chinensis (Marine centric diatom).